Reading from the N-terminus, the 90-residue chain is UPF0335 protein RPD_1405 (90 aa).

The protein belongs to the UPF0335 family.

The protein is UPF0335 protein RPD_1405 of Rhodopseudomonas palustris (strain BisB5).